The sequence spans 129 residues: Replication initiation control protein YabA (129 aa).

A disordered region spans residues 52–71 (LSLTDEATPEPKAETEAEHG). The segment covering 60-71 (PEPKAETEAEHG) has biased composition (basic and acidic residues). Positions 103, 105, 119, and 122 each coordinate Zn(2+).

This sequence belongs to the YabA family. In terms of assembly, homotetramer. Interacts with both DnaA and DnaN, acting as a bridge between these two proteins. Zn(2+) serves as cofactor.

The protein resides in the cytoplasm. The protein localises to the nucleoid. Involved in control of chromosome replication initiation. Inhibits the cooperative binding of DnaA to the oriC region, thus negatively regulating initiation of chromosome replication. Inhibits the ability of DnaA-ATP to form a helix on DNA; does not disassemble preformed DnaA-DNA helices. Decreases the residence time of DnaA on the chromosome at its binding sites (oriC, replication forks and promoter-binding sites). Tethers DnaA to the replication machinery via the DNA polymerase beta sliding clamp subunit (dnaN). Associates with oriC and other DnaA targets on the chromosome in a DnaA-dependent manner. This Listeria monocytogenes serotype 4a (strain HCC23) protein is Replication initiation control protein YabA.